A 418-amino-acid chain; its full sequence is Thyroxine-binding globulin (418 aa).

Positions 1-20 are cleaved as a signal peptide; that stretch reads MSMFFYLFLLVLGLQATIHC. Residues asparagine 24, asparagine 39, asparagine 102, asparagine 168, asparagine 227, and asparagine 256 are each glycosylated (N-linked (GlcNAc...) asparagine). Residues asparagine 296 and lysine 401 each contribute to the thyroxine site.

It belongs to the serpin family. As to expression, expressed by the liver and secreted in plasma.

It localises to the secreted. Functionally, major thyroid hormone transport protein in serum. The sequence is that of Thyroxine-binding globulin (Serpina7) from Rattus norvegicus (Rat).